Reading from the N-terminus, the 508-residue chain is Matrix metalloproteinase-19 (508 aa).

An N-terminal signal peptide occupies residues 1–18 (MNCQQLWLGFLLPMTVSG). Residues 19 to 97 (RVLGLAEVAP…EDPFNQKTLK (79 aa)) constitute a propeptide that is removed on maturation. Residues 83 to 90 (PRCGLEDP) carry the Cysteine switch motif. Residues Cys-85 and His-212 each coordinate Zn(2+). Glu-213 is a catalytic residue. Residues His-216 and His-222 each contribute to the Zn(2+) site. Residues 262–288 (IRDEEEEETELPTVPPVPTEPSPMPDP) form a disordered region. A compositionally biased stretch (pro residues) spans 274-287 (TVPPVPTEPSPMPD). 4 Hemopexin repeats span residues 286-333 (PDPC…WEGL), 334-380 (PGNL…EPNL), 381-425 (DAAL…FTGV), and 426-472 (PNQP…WMHC). Cys-289 and Cys-472 are disulfide-bonded. Asn-464 carries N-linked (GlcNAc...) asparagine glycosylation.

It belongs to the peptidase M10A family. The cofactor is Zn(2+). Ca(2+) is required as a cofactor. Activated by autolytic cleavage after Lys-97. Post-translationally, tyrosine phosphorylated by PKDCC/VLK. As to expression, expressed in mammary gland, placenta, lung, pancreas, ovary, small intestine, spleen, thymus, prostate, testis colon, heart and blood vessel walls. Not detected in brain and peripheral blood leukocytes. Also expressed in the synovial fluid of normal and rheumatoid patients.

It is found in the secreted. It localises to the extracellular space. The protein resides in the extracellular matrix. With respect to regulation, strongly inhibited by TIMP-2, TIMP-3 and TIMP-4, while TIMP-1 is less efficient. Functionally, endopeptidase that degrades various components of the extracellular matrix, such as aggrecan and cartilage oligomeric matrix protein (comp), during development, haemostasis and pathological conditions (arthritic disease). May also play a role in neovascularization or angiogenesis. Hydrolyzes collagen type IV, laminin, nidogen, nascin-C isoform, fibronectin, and type I gelatin. The polypeptide is Matrix metalloproteinase-19 (MMP19) (Homo sapiens (Human)).